We begin with the raw amino-acid sequence, 190 residues long: Lipid A acyltransferase PagP (190 aa).

Positions 1–29 are cleaved as a signal peptide; the sequence is MYVAMIIRKYFLIIALLVMPWLAIPSVSA. Residues histidine 62, aspartate 105, and serine 106 contribute to the active site.

It belongs to the lipid A palmitoyltransferase family. As to quaternary structure, homodimer.

It is found in the cell outer membrane. The catalysed reaction is a lipid A + a 1,2-diacyl-sn-glycero-3-phosphocholine = a hepta-acyl lipid A + a 2-acyl-sn-glycero-3-phosphocholine. It carries out the reaction a lipid IVA + a 1,2-diacyl-sn-glycero-3-phosphocholine = a lipid IVB + a 2-acyl-sn-glycero-3-phosphocholine. The enzyme catalyses a lipid IIA + a 1,2-diacyl-sn-glycero-3-phosphocholine = a lipid IIB + a 2-acyl-sn-glycero-3-phosphocholine. Transfers a fatty acid residue from the sn-1 position of a phospholipid to the N-linked hydroxyfatty acid chain on the proximal unit of lipid A or its precursors. In Salmonella typhi, this protein is Lipid A acyltransferase PagP.